A 207-amino-acid chain; its full sequence is Keratin-associated protein 27-1 (207 aa).

The tract at residues 184 to 207 (QLLESSPGVEPTCCVTGGSQLPSK) is disordered.

This sequence belongs to the PMG family. As to quaternary structure, interacts with hair keratins.

Its function is as follows. In the hair cortex, hair keratin intermediate filaments are embedded in an interfilamentous matrix, consisting of hair keratin-associated proteins (KRTAP), which are essential for the formation of a rigid and resistant hair shaft through their extensive disulfide bond cross-linking with abundant cysteine residues of hair keratins. The matrix proteins include the high-sulfur and high-glycine-tyrosine keratins. This Homo sapiens (Human) protein is Keratin-associated protein 27-1 (KRTAP27-1).